Reading from the N-terminus, the 831-residue chain is Cysteine--tRNA ligase, cytoplasmic (831 aa).

Residue alanine 2 is modified to N-acetylalanine. Serine 102 carries the post-translational modification Phosphoserine. Cysteine 138 is a Zn(2+) binding site. Glycine 139 serves as a coordination point for L-cysteine. Residues 140–150 carry the 'HIGH' region motif; that stretch reads PTVYDASHMGH. Residue threonine 179 participates in L-cysteine binding. A 'KIIK' region motif is present at residues 184–187; that stretch reads KIIR. 2 positions are modified to phosphoserine: serine 388 and serine 390. 3 residues coordinate Zn(2+): cysteine 431, histidine 456, and glutamate 460. An L-cysteine-binding site is contributed by histidine 456. The short motif at 489 to 493 is the 'KMSKS' region element; that stretch reads KMSKS. Lysine 492 provides a ligand contact to ATP. The span at 736–762 shows a compositional bias: basic and acidic residues; that stretch reads GKKRAEEEKRRKKEEAARKKQEQEAAK. Residues 736–766 form a disordered region; sequence GKKRAEEEKRRKKEEAARKKQEQEAAKLAKM. Serine 829 is modified (phosphoserine).

The protein belongs to the class-I aminoacyl-tRNA synthetase family. In terms of assembly, homodimer. Zn(2+) is required as a cofactor.

It localises to the cytoplasm. It catalyses the reaction tRNA(Cys) + L-cysteine + ATP = L-cysteinyl-tRNA(Cys) + AMP + diphosphate. Catalyzes the ATP-dependent ligation of cysteine to tRNA(Cys). This is Cysteine--tRNA ligase, cytoplasmic (Cars1) from Mus musculus (Mouse).